A 194-amino-acid chain; its full sequence is Potassium-transporting ATPase KdpC subunit (194 aa).

The helical transmembrane segment at 12 to 34 (LFLLLLTGGVYPLLTTALGQWWF) threads the bilayer.

It belongs to the KdpC family. The system is composed of three essential subunits: KdpA, KdpB and KdpC.

It localises to the cell inner membrane. Part of the high-affinity ATP-driven potassium transport (or Kdp) system, which catalyzes the hydrolysis of ATP coupled with the electrogenic transport of potassium into the cytoplasm. This subunit acts as a catalytic chaperone that increases the ATP-binding affinity of the ATP-hydrolyzing subunit KdpB by the formation of a transient KdpB/KdpC/ATP ternary complex. The polypeptide is Potassium-transporting ATPase KdpC subunit (Salmonella enteritidis PT4 (strain P125109)).